Here is a 302-residue protein sequence, read N- to C-terminus: m7GpppN-mRNA hydrolase NUDT17 (302 aa).

In terms of domain architecture, Nudix hydrolase spans 89–237 (GRGVDLGVAV…DGTETPKHLP (149 aa)). Positions 128–149 (GHVEPDEELLDGGLRELWEESG) match the Nudix box motif. Residues E143 and E147 each contribute to the Mg(2+) site.

The protein belongs to the Nudix hydrolase family. The cofactor is Mg(2+). It depends on Mn(2+) as a cofactor.

The enzyme catalyses a 5'-end (N(7)-methyl 5'-triphosphoguanosine)-ribonucleoside in mRNA + H2O = N(7)-methyl-GDP + a 5'-end phospho-ribonucleoside in mRNA + 2 H(+). Acts as a decapping enzyme capable of hydrolyzing monomethylated capped RNAs (in vitro). Hydrolyzes monomethylated capped RNA after alpha and beta phosphates to form N(7)-methyl-GDP. Shows low activity towards unmethylated capped RNA. The protein is m7GpppN-mRNA hydrolase NUDT17 (NUDT17) of Bos taurus (Bovine).